Reading from the N-terminus, the 83-residue chain is Cell division topological specificity factor (83 aa).

The protein belongs to the MinE family.

Its function is as follows. Prevents the cell division inhibition by proteins MinC and MinD at internal division sites while permitting inhibition at polar sites. This ensures cell division at the proper site by restricting the formation of a division septum at the midpoint of the long axis of the cell. The protein is Cell division topological specificity factor of Acidithiobacillus ferrooxidans (strain ATCC 23270 / DSM 14882 / CIP 104768 / NCIMB 8455) (Ferrobacillus ferrooxidans (strain ATCC 23270)).